A 364-amino-acid polypeptide reads, in one-letter code: RNA-binding protein 4 (364 aa).

RRM domains are found at residues 2 to 72 (VKLF…ASKN) and 78 to 148 (TKLH…LSTS). Lys-79 is covalently cross-linked (Glycyl lysine isopeptide (Lys-Gly) (interchain with G-Cter in SUMO2)). Position 86 is a phosphoserine (Ser-86). Lys-92 is covalently cross-linked (Glycyl lysine isopeptide (Lys-Gly) (interchain with G-Cter in SUMO2)). The segment at 160 to 177 (SGCYRCGKEGHWSKECPI) adopts a CCHC-type zinc-finger fold. Residues 196–364 (AVRTPYTMSY…YADRARYSAF (169 aa)) form an interaction with TNPO3 region. At Ser-309 the chain carries Phosphoserine.

As to quaternary structure, interacts with TNPO3; the interaction mediates nuclear import of the protein and is disrupted by nuclear Ran bound to GTP. Interacts with EIF4G1 and WT1. Interacts with EIF4A1; the interaction is modulated under stress-induced conditions. Interacts with AGO1. Interacts with AGO2; the interaction occurs under both cell proliferation and differentiation conditions and in an RNA- and phosphorylation-independent manner. Interacts with DDX5; the interaction occurs in an RNA-independent manner. Interacts with RBPMS; the interaction allows cooperative assembly of RNA-bound stable cell-specific alternative splicing regulatory complexes. Post-translationally, phosphorylated. Phosphorylated in vitro on Ser-309 by SRPK1. Phosphorylation on Ser-309 is induced upon cell stress signaling, which alters its subcellular localization and may modulate its activity on IRES-mediated mRNA translation. Phosphorylation on Ser-309 is induced upon cell muscle differentiation.

Its subcellular location is the nucleus. It is found in the nucleolus. The protein resides in the nucleus speckle. It localises to the cytoplasm. The protein localises to the cytoplasmic granule. Its function is as follows. RNA-binding factor involved in multiple aspects of cellular processes like alternative splicing of pre-mRNA and translation regulation. Modulates alternative 5'-splice site and exon selection. Acts as a muscle cell differentiation-promoting factor. Activates exon skipping of the PTB pre-mRNA during muscle cell differentiation. Antagonizes the activity of the splicing factor PTBP1 to modulate muscle cell-specific exon selection of alpha tropomyosin. Binds to intronic pyrimidine-rich sequence of the TPM1 and MAPT pre-mRNAs. Required for the translational activation of PER1 mRNA in response to circadian clock. Binds directly to the 3'-UTR of the PER1 mRNA. Exerts a suppressive activity on Cap-dependent translation via binding to CU-rich responsive elements within the 3'UTR of mRNAs, a process increased under stress conditions or during myocytes differentiation. Recruits EIF4A1 to stimulate IRES-dependent translation initiation in respons to cellular stress. Associates to internal ribosome entry segment (IRES) in target mRNA species under stress conditions. Plays a role for miRNA-guided RNA cleavage and translation suppression by promoting association of AGO2-containing miRNPs with their cognate target mRNAs. Associates with miRNAs during muscle cell differentiation. Binds preferentially to 5'-CGCGCG[GCA]-3' motif in vitro. The sequence is that of RNA-binding protein 4 (RBM4) from Macaca fascicularis (Crab-eating macaque).